A 154-amino-acid chain; its full sequence is Probable prefoldin subunit 5 (154 aa).

The protein belongs to the prefoldin subunit alpha family. As to quaternary structure, heterohexamer of two PFD-alpha type and four PFD-beta type subunits. Interacts with byr1.

The protein localises to the cytoplasm. In terms of biological role, binds specifically to cytosolic chaperonin (c-CPN) and transfers target proteins to it. Binds to nascent polypeptide chain and promotes folding in an environment in which there are many competing pathways for nonnative proteins. Required for normal cytoskeletal function and when bound to byr1, is involved in the regulation of sexual differentiation. This Schizosaccharomyces pombe (strain 972 / ATCC 24843) (Fission yeast) protein is Probable prefoldin subunit 5 (bob1).